Reading from the N-terminus, the 511-residue chain is Bifunctional purine biosynthesis protein PurH (511 aa).

The 145-residue stretch at 1-145 folds into the MGS-like domain; it reads MKKRALVSVS…KNHKFVSVIV (145 aa).

Belongs to the PurH family.

It catalyses the reaction (6R)-10-formyltetrahydrofolate + 5-amino-1-(5-phospho-beta-D-ribosyl)imidazole-4-carboxamide = 5-formamido-1-(5-phospho-D-ribosyl)imidazole-4-carboxamide + (6S)-5,6,7,8-tetrahydrofolate. It carries out the reaction IMP + H2O = 5-formamido-1-(5-phospho-D-ribosyl)imidazole-4-carboxamide. The protein operates within purine metabolism; IMP biosynthesis via de novo pathway; 5-formamido-1-(5-phospho-D-ribosyl)imidazole-4-carboxamide from 5-amino-1-(5-phospho-D-ribosyl)imidazole-4-carboxamide (10-formyl THF route): step 1/1. Its pathway is purine metabolism; IMP biosynthesis via de novo pathway; IMP from 5-formamido-1-(5-phospho-D-ribosyl)imidazole-4-carboxamide: step 1/1. The sequence is that of Bifunctional purine biosynthesis protein PurH from Bacillus cereus (strain B4264).